The chain runs to 271 residues: Acyl-[acyl-carrier-protein]--UDP-N-acetylglucosamine O-acyltransferase (271 aa).

Belongs to the transferase hexapeptide repeat family. LpxA subfamily. In terms of assembly, homotrimer.

The protein localises to the cytoplasm. It carries out the reaction a (3R)-hydroxyacyl-[ACP] + UDP-N-acetyl-alpha-D-glucosamine = a UDP-3-O-[(3R)-3-hydroxyacyl]-N-acetyl-alpha-D-glucosamine + holo-[ACP]. Its pathway is glycolipid biosynthesis; lipid IV(A) biosynthesis; lipid IV(A) from (3R)-3-hydroxytetradecanoyl-[acyl-carrier-protein] and UDP-N-acetyl-alpha-D-glucosamine: step 1/6. Involved in the biosynthesis of lipid A, a phosphorylated glycolipid that anchors the lipopolysaccharide to the outer membrane of the cell. This is Acyl-[acyl-carrier-protein]--UDP-N-acetylglucosamine O-acyltransferase from Ralstonia nicotianae (strain ATCC BAA-1114 / GMI1000) (Ralstonia solanacearum).